Here is a 357-residue protein sequence, read N- to C-terminus: DNA integrity scanning protein DisA (357 aa).

One can recognise a DAC domain in the interval 8–146; that stretch reads VKSMINILQL…GNLRYTLKDI (139 aa). ATP contacts are provided by residues Gly75, Leu93, and 106–110; that span reads MRHRT.

This sequence belongs to the DisA family. Homooctamer. Requires Mg(2+) as cofactor.

It catalyses the reaction 2 ATP = 3',3'-c-di-AMP + 2 diphosphate. Participates in a DNA-damage check-point that is active prior to asymmetric division when DNA is damaged. DisA forms globular foci that rapidly scan along the chromosomes during sporulation, searching for lesions. When a lesion is present, DisA pauses at the lesion site. This triggers a cellular response that culminates in a temporary block in sporulation initiation. In terms of biological role, also has diadenylate cyclase activity, catalyzing the condensation of 2 ATP molecules into cyclic di-AMP (c-di-AMP). c-di-AMP acts as a signaling molecule that couples DNA integrity with progression of sporulation. The rise in c-di-AMP level generated by DisA while scanning the chromosome, operates as a positive signal that advances sporulation; upon encountering a lesion, the DisA focus arrests at the damaged site and halts c-di-AMP synthesis. This chain is DNA integrity scanning protein DisA, found in Bacillus cereus (strain ATCC 14579 / DSM 31 / CCUG 7414 / JCM 2152 / NBRC 15305 / NCIMB 9373 / NCTC 2599 / NRRL B-3711).